A 268-amino-acid chain; its full sequence is MSVTYTSISSLLASPFQRLTSSMWNTATLLLYQLYETGGNSLTSILQNGNLYIPNNISALAGFFQKEVYVSGQPVLTEQDPIYIAGFIGTANQQINQILYSNQQLYYSISQLPKEISYDLYTNLYRTISDLTSTLSSQISQLQKTGINALYSIADFLAYTFTYFYLATVGLANTLNKLTLFLSPPTIEGLQISLSTIPSPIYNGSTIETVRIILQNLSNYIVYIGNKLYNSFPILPGDSLEFHVRNPSNVYAWATGKCTVYALFEVVQ.

Residues 150–172 (LYSIADFLAYTFTYFYLATVGLA) form a helical membrane-spanning segment.

The protein resides in the host membrane. This is an uncharacterized protein from Sulfolobus islandicus rod-shaped virus 1 (SIRV-1).